The sequence spans 468 residues: Uronate isomerase (468 aa).

Belongs to the metallo-dependent hydrolases superfamily. Uronate isomerase family.

It catalyses the reaction D-glucuronate = D-fructuronate. The catalysed reaction is aldehydo-D-galacturonate = keto-D-tagaturonate. The protein operates within carbohydrate metabolism; pentose and glucuronate interconversion. The chain is Uronate isomerase from Marinomonas sp. (strain MWYL1).